A 485-amino-acid polypeptide reads, in one-letter code: Bindin (485 aa).

Residues 1 to 20 (MGFHQISVIIVVLALASARA) form the signal peptide. A propeptide spanning residues 21–247 (ADEFPSHTDT…DSERGARKKR (227 aa)) is cleaved from the precursor. Disordered regions lie at residues 157 to 195 (GETRKRRGADDNDGDDVSKRASPRKGDEPAGHKLKDLAP), 219 to 273 (ISGH…PAQQ), and 305 to 331 (GGGQFGAFSPGEAEADNADYDEYSDSL). A compositionally biased stretch (basic and acidic residues) spans 172–192 (DVSKRASPRKGDEPAGHKLKD). Residues 250–264 (NQGNYPQAMNPQSRG) show a composition bias toward polar residues. Over residues 317-331 (AEADNADYDEYSDSL) the composition is skewed to acidic residues. A fucose-binding domain region spans residues 371–379 (LRHLRHHSN). The tract at residues 459 to 485 (QQGMGGVPQRMGGQPQGNAYNQGYRQG) is disordered. Over residues 465 to 475 (VPQRMGGQPQG) the composition is skewed to low complexity. Positions 476 to 485 (NAYNQGYRQG) are enriched in polar residues.

The protein belongs to the bindin family.

The protein resides in the cytoplasmic vesicle. Its subcellular location is the secretory vesicle. It localises to the acrosome lumen. In terms of biological role, species-specific sea urchin sperm protein required for adhesion of sperm to the egg surface during fertilization. Bindin coats the acrosomal process after it is externalized by the acrosome reaction. It binds to sulfated, fucose-containing polysaccharides on the vitelline layer receptor proteoglycans which cover the egg plasma membrane. This Mesocentrotus franciscanus (Giant red sea urchin) protein is Bindin.